Here is a 549-residue protein sequence, read N- to C-terminus: Alanine aminotransferase 2-like (549 aa).

Position 367 is an N6-(pyridoxal phosphate)lysine (Lys-367).

It belongs to the class-I pyridoxal-phosphate-dependent aminotransferase family. Alanine aminotransferase subfamily. Homodimer. Pyridoxal 5'-phosphate serves as cofactor.

It catalyses the reaction L-alanine + 2-oxoglutarate = pyruvate + L-glutamate. Its pathway is amino-acid degradation; L-alanine degradation via transaminase pathway; pyruvate from L-alanine: step 1/1. Functionally, catalyzes the reversible transamination between alanine and 2-oxoglutarate to form pyruvate and glutamate. This is Alanine aminotransferase 2-like (gpt2l) from Danio rerio (Zebrafish).